We begin with the raw amino-acid sequence, 518 residues long: GMP synthase [glutamine-hydrolyzing] (518 aa).

The region spanning 8–201 (TVLIIDFGSQ…VCKISGIKNN (194 aa)) is the Glutamine amidotransferase type-1 domain. Cys-85 acts as the Nucleophile in catalysis. Catalysis depends on residues His-175 and Glu-177. Residues 202–393 (WSMAAYRDQA…LGLPEEFIKR (192 aa)) form the GMPS ATP-PPase domain. ATP is bound at residue 229 to 235 (SGGVDSS).

Homodimer.

It carries out the reaction XMP + L-glutamine + ATP + H2O = GMP + L-glutamate + AMP + diphosphate + 2 H(+). It participates in purine metabolism; GMP biosynthesis; GMP from XMP (L-Gln route): step 1/1. In terms of biological role, catalyzes the synthesis of GMP from XMP. The sequence is that of GMP synthase [glutamine-hydrolyzing] from Bartonella bacilliformis (strain ATCC 35685 / KC583 / Herrer 020/F12,63).